A 79-amino-acid polypeptide reads, in one-letter code: MAKIGVENSLTDVQQALQQQGHEVVTINSEHDAQGCDCCVVTGQDSNMMGIADTSIKGSVINAHGLTTDEICQQVESRI.

Belongs to the UPF0180 family.

This chain is UPF0180 protein BCE_1513, found in Bacillus cereus (strain ATCC 10987 / NRS 248).